The primary structure comprises 578 residues: Protein RIK (578 aa).

The segment at 1–34 is disordered; that stretch reads MTEDNDEARVPLSDSSTTNDASRTRQRRKRKWDK. Positions 206–273 constitute a KH domain; that stretch reads SSNVAARIRG…KSIDDAKRLA (68 aa). Residues 413-425 show a composition bias toward polar residues; that stretch reads ATSLSIPSDNASN. The interval 413–578 is disordered; sequence ATSLSIPSDN…DPDEPLTTRS (166 aa). The span at 472–492 shows a compositional bias: pro residues; that stretch reads PPSPRSVMPPPPPKTIAPPPS. Low complexity-rich tracts occupy residues 493–503 and 510–521; these read KTMSPPSSKSM and SKTMSPLSSKSM. The span at 560 to 572 shows a compositional bias: acidic residues; sequence YGDDEDDDDDPDE.

Interacts with AS1. Expressed in vegetative tissues.

It localises to the nucleus. The polypeptide is Protein RIK (RIK) (Arabidopsis thaliana (Mouse-ear cress)).